A 78-amino-acid polypeptide reads, in one-letter code: Small integral membrane protein 1 (78 aa).

Position 1 is an N-acetylmethionine (Met-1). The tract at residues 1–22 (MQSQESGVHYSRWDSSSRDEVS) is disordered. Topologically, residues 1–48 (MQSQESGVHYSRWDSSSRDEVSMTAMSSSEEASCYRRISQKLCSGKLG) are cytoplasmic. 4 positions are modified to phosphoserine: Ser-6, Ser-17, Ser-22, and Ser-27. The span at 11–21 (SRWDSSSRDEV) shows a compositional bias: basic and acidic residues. A helical; Signal-anchor for type II membrane protein transmembrane segment spans residues 49 to 69 (IAMKVLGGVALFWIIFILGYI). At 70 to 78 (TGYYVHKCK) the chain is on the extracellular side.

The protein belongs to the SMIM1 family. Homooligomer; disulfide-linked.

Its subcellular location is the cell membrane. In terms of biological role, regulator of red blood cell formation. This chain is Small integral membrane protein 1, found in Mus musculus (Mouse).